Reading from the N-terminus, the 321-residue chain is Glycerol-3-phosphate phosphatase (321 aa).

Asp-34 serves as the catalytic Nucleophile. Mg(2+) is bound by residues Asp-34, Asp-36, and Asp-260. Asp-36 (proton donor) is an active-site residue.

The protein belongs to the HAD-like hydrolase superfamily. CbbY/CbbZ/Gph/YieH family. As to quaternary structure, homodimer. It depends on Mg(2+) as a cofactor. As to expression, ubiquitously expressed with higher expression in testis, heart, skeletal muscle and islet tissue (at protein level).

It catalyses the reaction O-phospho-L-tyrosyl-[protein] + H2O = L-tyrosyl-[protein] + phosphate. The enzyme catalyses sn-glycerol 1-phosphate + H2O = glycerol + phosphate. It carries out the reaction sn-glycerol 3-phosphate + H2O = glycerol + phosphate. With respect to regulation, inhibited by orthovanadate, beryllium trifluoride, Ca(2+) and EDTA. In terms of biological role, glycerol-3-phosphate phosphatase hydrolyzing glycerol-3-phosphate into glycerol. Thereby, regulates the cellular levels of glycerol-3-phosphate a metabolic intermediate of glucose, lipid and energy metabolism. Was also shown to have a 2-phosphoglycolate phosphatase activity and a tyrosine-protein phosphatase activity. However, their physiological relevance is unclear. In vitro, also has a phosphatase activity toward ADP, ATP, GDP and GTP. The chain is Glycerol-3-phosphate phosphatase from Mus musculus (Mouse).